A 157-amino-acid chain; its full sequence is MNNLNSENMCNCCNSANSCGGTNGISWDREKCEYCGPCAIKCPNDAIMVVNPKGLELPSRAKTERANEFKMCDLCGTCVSACPTEALQMGKIVHNEKEYDRIEFTPSLCDSCGACVEICPQNVLKLNEEYKLKGFCVMCLKCIDACDKTNQNALSLK.

3 consecutive 4Fe-4S ferredoxin-type domains span residues 23–52 (NGIS…VVNP), 62–92 (KTER…MGKI), and 100–129 (DRIE…LNEE). Positions 32, 35, 38, 42, 72, 75, 78, 82, 109, 112, 115, 119, 136, 139, 142, and 146 each coordinate [4Fe-4S] cluster.

The cofactor is [4Fe-4S] cluster.

This is Polyferredoxin protein VhcB (vhcB) from Methanococcus voltae.